The following is a 242-amino-acid chain: Venom redulysin 2 (242 aa).

The N-terminal stretch at 1–19 (MSKIWILLLLVGAVQFARG) is a signal peptide. Positions 20–46 (FPALEEEQEDDVIDWPSFEYDLSDEER) are excised as a propeptide.

It belongs to the redulysin-like family. Contains 5 disulfide bonds. Expressed by the venom gland (posterior main gland) (at protein level).

It is found in the secreted. In terms of biological role, highly abundant protein that may be responsible for the observed disruption of sensory neuron membranes, since it is homologous to proteins such as trialysin, which forms pores in lipid bilayers. Probable insecticidal toxin. In Platymeris rhadamanthus (Red spot assassin bug), this protein is Venom redulysin 2.